The sequence spans 355 residues: Probable butyrate kinase (355 aa).

It belongs to the acetokinase family.

Its subcellular location is the cytoplasm. It catalyses the reaction butanoate + ATP = butanoyl phosphate + ADP. This is Probable butyrate kinase from Listeria welshimeri serovar 6b (strain ATCC 35897 / DSM 20650 / CCUG 15529 / CIP 8149 / NCTC 11857 / SLCC 5334 / V8).